The primary structure comprises 99 residues: Malonate decarboxylase acyl carrier protein (99 aa).

The residue at position 25 (Ser25) is an O-(phosphoribosyl dephospho-coenzyme A)serine.

The protein belongs to the MdcC family. Covalently binds the prosthetic group of malonate decarboxylase.

Its subcellular location is the cytoplasm. Subunit of malonate decarboxylase, it is an acyl carrier protein to which acetyl and malonyl thioester residues are bound via a 2'-(5''-phosphoribosyl)-3'-dephospho-CoA prosthetic group and turn over during the catalytic mechanism. The chain is Malonate decarboxylase acyl carrier protein from Pseudomonas aeruginosa (strain LESB58).